The sequence spans 1044 residues: Pre-mRNA-splicing factor ATP-dependent RNA helicase DEAH1 (1044 aa).

Residues 106-206 (EVVVEKKSSV…TLSKKEKEEA (101 aa)) are disordered. Basic and acidic residues predominate over residues 108 to 121 (VVEKKSSVSESRKS). A compositionally biased stretch (basic residues) spans 122–132 (DKGKKRFRKKS). Ser-135 and Ser-138 each carry phosphoserine. Over residues 157 to 166 (EEDDGSESEE) the composition is skewed to acidic residues. Positions 167-206 (ERVRDQKEREELEQHLKDRDTARTRKLTEQTLSKKEKEEA) are enriched in basic and acidic residues. The region spanning 414–577 (LKAVEEHQVL…FDTAPIFSFP (164 aa)) is the Helicase ATP-binding domain. 427-434 (GDTGSGKT) provides a ligand contact to ATP. Positions 524-527 (DEAH) match the DEAH box motif. Residues 600-775 (IVTILTIHVR…SVVLALKSLG (176 aa)) form the Helicase C-terminal domain.

It belongs to the DEAD box helicase family. DEAH subfamily. PRP2 sub-subfamily. As to expression, widely expressed.

The enzyme catalyses ATP + H2O = ADP + phosphate + H(+). In terms of biological role, involved in pre-mRNA splicing. This is Pre-mRNA-splicing factor ATP-dependent RNA helicase DEAH1 from Arabidopsis thaliana (Mouse-ear cress).